A 192-amino-acid chain; its full sequence is Xanthine phosphoribosyltransferase (192 aa).

The xanthine site is built by leucine 20 and asparagine 27. Residue 128–132 coordinates 5-phospho-alpha-D-ribose 1-diphosphate; the sequence is AQGEA. Lysine 156 contributes to the xanthine binding site.

It belongs to the purine/pyrimidine phosphoribosyltransferase family. Xpt subfamily. In terms of assembly, homodimer.

It is found in the cytoplasm. It carries out the reaction XMP + diphosphate = xanthine + 5-phospho-alpha-D-ribose 1-diphosphate. It participates in purine metabolism; XMP biosynthesis via salvage pathway; XMP from xanthine: step 1/1. Functionally, converts the preformed base xanthine, a product of nucleic acid breakdown, to xanthosine 5'-monophosphate (XMP), so it can be reused for RNA or DNA synthesis. The chain is Xanthine phosphoribosyltransferase from Lactobacillus helveticus (strain DPC 4571).